The following is a 349-amino-acid chain: 4-hydroxythreonine-4-phosphate dehydrogenase (349 aa).

Thr-135 serves as a coordination point for substrate. Positions 170, 215, and 276 each coordinate a divalent metal cation. Lys-284, Asn-293, and Arg-302 together coordinate substrate.

This sequence belongs to the PdxA family. Homodimer. The cofactor is a divalent metal cation.

The protein localises to the cytoplasm. The catalysed reaction is 4-(phosphooxy)-L-threonine + NAD(+) = 3-amino-2-oxopropyl phosphate + CO2 + NADH. It functions in the pathway cofactor biosynthesis; pyridoxine 5'-phosphate biosynthesis; pyridoxine 5'-phosphate from D-erythrose 4-phosphate: step 4/5. Functionally, catalyzes the NAD(P)-dependent oxidation of 4-(phosphooxy)-L-threonine (HTP) into 2-amino-3-oxo-4-(phosphooxy)butyric acid which spontaneously decarboxylates to form 3-amino-2-oxopropyl phosphate (AHAP). This chain is 4-hydroxythreonine-4-phosphate dehydrogenase, found in Synechococcus sp. (strain JA-3-3Ab) (Cyanobacteria bacterium Yellowstone A-Prime).